The primary structure comprises 144 residues: Large ribosomal subunit protein uL16 (144 aa).

Belongs to the universal ribosomal protein uL16 family. As to quaternary structure, part of the 50S ribosomal subunit.

In terms of biological role, binds 23S rRNA and is also seen to make contacts with the A and possibly P site tRNAs. In Clostridium beijerinckii (strain ATCC 51743 / NCIMB 8052) (Clostridium acetobutylicum), this protein is Large ribosomal subunit protein uL16.